Consider the following 291-residue polypeptide: N-acetylmannosamine kinase (291 aa).

ATP contacts are provided by residues 5–12 (AVDIGGTK) and 132–139 (GVGGGIVV). Zn(2+) contacts are provided by histidine 156, cysteine 166, cysteine 168, and cysteine 173.

It belongs to the ROK (NagC/XylR) family. NanK subfamily. In terms of assembly, homodimer.

The catalysed reaction is an N-acyl-D-mannosamine + ATP = an N-acyl-D-mannosamine 6-phosphate + ADP + H(+). It participates in amino-sugar metabolism; N-acetylneuraminate degradation; D-fructose 6-phosphate from N-acetylneuraminate: step 2/5. Its function is as follows. Catalyzes the phosphorylation of N-acetylmannosamine (ManNAc) to ManNAc-6-P. The protein is N-acetylmannosamine kinase (nanK2) of Escherichia coli O6:H1 (strain CFT073 / ATCC 700928 / UPEC).